The chain runs to 275 residues: MDIDIVSVFPEYFDVLNLSLLGKAQERGLLAVRSHNLRQWTHDVHQSVDDTPVGGGAGMVMKPEVWAECLDELLGIPADAPANAHAAPAADSPVLIFPNPSAPLFTQQDATALSHAEHLVFGCGRYEGYDARIPQYYRERGVDVREYSIGDYVLNGGEVAVSVMLEAITRLLPGFMGNADSIVEESYTGENALLEHNQYTKPASWRGIDVPPVLISGDHGRVNRFRRDEALEKTSRLRPDLIARLDCHALDKQDRKTLMSLGWEVSGEHPRKLED.

S-adenosyl-L-methionine is bound by residues Gly-124 and 149 to 154; that span reads IGDYVL.

This sequence belongs to the RNA methyltransferase TrmD family. In terms of assembly, homodimer.

It is found in the cytoplasm. It catalyses the reaction guanosine(37) in tRNA + S-adenosyl-L-methionine = N(1)-methylguanosine(37) in tRNA + S-adenosyl-L-homocysteine + H(+). Functionally, specifically methylates guanosine-37 in various tRNAs. The sequence is that of tRNA (guanine-N(1)-)-methyltransferase from Bifidobacterium animalis subsp. lactis (strain AD011).